Reading from the N-terminus, the 247-residue chain is Putative urease accessory protein UreD homolog (247 aa).

The protein belongs to the UreD family. UreD, UreF and UreG form a complex that acts as a GTP-hydrolysis-dependent molecular chaperone, activating the urease apoprotein by helping to assemble the nickel containing metallocenter of UreC. The UreE protein probably delivers the nickel.

The protein localises to the cytoplasm. Required for maturation of urease via the functional incorporation of the urease nickel metallocenter. The polypeptide is Putative urease accessory protein UreD homolog (Escherichia coli O157:H7).